A 209-amino-acid polypeptide reads, in one-letter code: Floral homeotic protein GLOBOSA (209 aa).

The 55-residue stretch at 3-57 folds into the MADS-box domain; it reads RGKIEIKRIENSSNRQVTYSKRRNGILKKAKEISVLCDARVSVIIFASSGKMHEF. Positions 82–173 constitute a K-box domain; it reads HENLDNEINK…QLEIASMNRN (92 aa).

In terms of tissue distribution, expressed mainly in floral organs and, within the flower, expression is restricted to petals and stamens.

Its subcellular location is the nucleus. Functionally, transcription factor involved in the genetic control of flower development. Acts in conjunction with DEFICIENS (defA). The polypeptide is Floral homeotic protein GLOBOSA (GLO) (Nicotiana tabacum (Common tobacco)).